Reading from the N-terminus, the 569-residue chain is Proline--tRNA ligase (569 aa).

It belongs to the class-II aminoacyl-tRNA synthetase family. ProS type 1 subfamily. In terms of assembly, homodimer.

It localises to the cytoplasm. It carries out the reaction tRNA(Pro) + L-proline + ATP = L-prolyl-tRNA(Pro) + AMP + diphosphate. Its function is as follows. Catalyzes the attachment of proline to tRNA(Pro) in a two-step reaction: proline is first activated by ATP to form Pro-AMP and then transferred to the acceptor end of tRNA(Pro). As ProRS can inadvertently accommodate and process non-cognate amino acids such as alanine and cysteine, to avoid such errors it has two additional distinct editing activities against alanine. One activity is designated as 'pretransfer' editing and involves the tRNA(Pro)-independent hydrolysis of activated Ala-AMP. The other activity is designated 'posttransfer' editing and involves deacylation of mischarged Ala-tRNA(Pro). The misacylated Cys-tRNA(Pro) is not edited by ProRS. This is Proline--tRNA ligase from Nitrosospira multiformis (strain ATCC 25196 / NCIMB 11849 / C 71).